Consider the following 117-residue polypeptide: Iron-sulfur cluster insertion protein ErpA (117 aa).

Residues C45, C109, and C111 each coordinate iron-sulfur cluster.

It belongs to the HesB/IscA family. In terms of assembly, homodimer. Requires iron-sulfur cluster as cofactor.

Functionally, required for insertion of 4Fe-4S clusters for at least IspG. The polypeptide is Iron-sulfur cluster insertion protein ErpA (Saccharophagus degradans (strain 2-40 / ATCC 43961 / DSM 17024)).